We begin with the raw amino-acid sequence, 931 residues long: Protocadherin gamma-B2 (931 aa).

An N-terminal signal peptide occupies residues 1 to 30; it reads MKASSGRCGLVRWLQVLLPFLLSLFPGALP. 6 consecutive Cadherin domains span residues 31 to 133, 134 to 242, 243 to 347, 348 to 452, 453 to 562, and 570 to 675; these read VQIR…TPLF, KQTK…PPVF, SQDV…APEV, IVTS…APVF, QQTS…APRV, and DGSA…LPDL. Residues 31–691 are Extracellular-facing; the sequence is VQIRYSIPEE…SDPQAKLQFY (661 aa). N-linked (GlcNAc...) asparagine glycans are attached at residues asparagine 419 and asparagine 545. The helical transmembrane segment at 692 to 712 threads the bilayer; that stretch reads LVVALALISVLFFLAVILAIS. The Cytoplasmic segment spans residues 713–931; sequence LRLRLSSRSD…KKKSGKKEKK (219 aa). Disordered stretches follow at residues 814-840 and 901-931; these read DWRF…WPNN and ATLT…KEKK. Positions 815-840 are enriched in polar residues; sequence WRFSQAQRPGTSGSQNGDDTGTWPNN. Positions 921 to 931 are enriched in basic residues; that stretch reads NKKKSGKKEKK.

The protein localises to the cell membrane. Potential calcium-dependent cell-adhesion protein. May be involved in the establishment and maintenance of specific neuronal connections in the brain. In Homo sapiens (Human), this protein is Protocadherin gamma-B2 (PCDHGB2).